The primary structure comprises 379 residues: Heme A synthase (379 aa).

The tract at residues 1–28 (MAGSRSIFEEVQDSQKPAAMPGGVSRDR) is disordered. Helical transmembrane passes span 35–55 (VRVFIMILFVMVVVQIAIGGL), 124–144 (FLGVVWAVGFVGLLATKSVPV), 150–170 (LLLLGVLGGLQGVAGWWMVHS), 183–203 (RLAVHLGLAFLILGLMAWYIL), 227–247 (ATGLLHLTALQILIGALVAGI), 287–307 (FFHRVTGYLLFVIGVAAWIMA), 318–338 (AFDWMAVMLFGQIVLGIMTVM), and 341–361 (SPWYLAIVHQFGAVVLITLIL). Residue His-289 coordinates heme. His-349 contacts heme.

Belongs to the COX15/CtaA family. Type 2 subfamily. As to quaternary structure, interacts with CtaB. Requires heme b as cofactor.

The protein resides in the cell membrane. It catalyses the reaction Fe(II)-heme o + 2 A + H2O = Fe(II)-heme a + 2 AH2. It participates in porphyrin-containing compound metabolism; heme A biosynthesis; heme A from heme O: step 1/1. Its function is as follows. Catalyzes the conversion of heme O to heme A by two successive hydroxylations of the methyl group at C8. The first hydroxylation forms heme I, the second hydroxylation results in an unstable dihydroxymethyl group, which spontaneously dehydrates, resulting in the formyl group of heme A. The chain is Heme A synthase from Jannaschia sp. (strain CCS1).